We begin with the raw amino-acid sequence, 139 residues long: Ribonuclease VapC39 (139 aa).

The PINc domain maps to 4 to 133 (LLDVNVLIAL…DAALADSASA (130 aa)). Mg(2+)-binding residues include Asp-6 and Asp-106.

This sequence belongs to the PINc/VapC protein family. It depends on Mg(2+) as a cofactor.

Functionally, toxic component of a type II toxin-antitoxin (TA) system. An RNase. Its toxic effect is neutralized by coexpression with cognate antitoxin VapB39. This is Ribonuclease VapC39 from Mycobacterium tuberculosis (strain CDC 1551 / Oshkosh).